A 341-amino-acid polypeptide reads, in one-letter code: Putative casein kinase I C03C10.2 (341 aa).

The 277-residue stretch at 50–326 folds into the Protein kinase domain; the sequence is WSIEGVIGNG…KCLYSPKSLL (277 aa). ATP is bound by residues 56–64 and lysine 79; that span reads IGNGGYGQI. Residue aspartate 173 is the Proton acceptor of the active site.

Belongs to the protein kinase superfamily. CK1 Ser/Thr protein kinase family. Casein kinase I subfamily.

The catalysed reaction is L-seryl-[protein] + ATP = O-phospho-L-seryl-[protein] + ADP + H(+). It catalyses the reaction L-threonyl-[protein] + ATP = O-phospho-L-threonyl-[protein] + ADP + H(+). The chain is Putative casein kinase I C03C10.2 from Caenorhabditis elegans.